The following is a 250-amino-acid chain: uncharacterized protein (250 aa).

Residues Glu97, Glu99, and Asp128 each coordinate a divalent metal cation.

The protein belongs to the FAH family.

This is an uncharacterized protein from Archaeoglobus fulgidus (strain ATCC 49558 / DSM 4304 / JCM 9628 / NBRC 100126 / VC-16).